Reading from the N-terminus, the 421-residue chain is 3-isopropylmalate dehydratase large subunit (421 aa).

3 residues coordinate [4Fe-4S] cluster: Cys-302, Cys-362, and Cys-365.

The protein belongs to the aconitase/IPM isomerase family. LeuC type 2 subfamily. Heterodimer of LeuC and LeuD. [4Fe-4S] cluster is required as a cofactor.

The catalysed reaction is (2R,3S)-3-isopropylmalate = (2S)-2-isopropylmalate. The protein operates within amino-acid biosynthesis; L-leucine biosynthesis; L-leucine from 3-methyl-2-oxobutanoate: step 2/4. In terms of biological role, catalyzes the isomerization between 2-isopropylmalate and 3-isopropylmalate, via the formation of 2-isopropylmaleate. The protein is 3-isopropylmalate dehydratase large subunit of Campylobacter concisus (strain 13826).